The following is a 446-amino-acid chain: Ribosomal protein uS12 methylthiotransferase RimO (446 aa).

The region spanning 4 to 119 (YKVGMVSLGC…IDKVIKEFIE (116 aa)) is the MTTase N-terminal domain. [4Fe-4S] cluster contacts are provided by Cys-13, Cys-48, Cys-82, Cys-157, Cys-161, and Cys-164. Positions 143-373 (TTQKESAYIR…MLSQEKISND (231 aa)) constitute a Radical SAM core domain. The region spanning 376–442 (KLKVNKKYDI…DYDLIGVVED (67 aa)) is the TRAM domain.

This sequence belongs to the methylthiotransferase family. RimO subfamily. It depends on [4Fe-4S] cluster as a cofactor.

It localises to the cytoplasm. The enzyme catalyses L-aspartate(89)-[ribosomal protein uS12]-hydrogen + (sulfur carrier)-SH + AH2 + 2 S-adenosyl-L-methionine = 3-methylsulfanyl-L-aspartate(89)-[ribosomal protein uS12]-hydrogen + (sulfur carrier)-H + 5'-deoxyadenosine + L-methionine + A + S-adenosyl-L-homocysteine + 2 H(+). Functionally, catalyzes the methylthiolation of an aspartic acid residue of ribosomal protein uS12. The sequence is that of Ribosomal protein uS12 methylthiotransferase RimO from Clostridium botulinum (strain Eklund 17B / Type B).